We begin with the raw amino-acid sequence, 986 residues long: MAPLRLSRANPLAFARWPVTLITAVVYLAFLIPLLIVHHVVPSPPTANPNGLDLTQAWADLQVLTDGFHPYNSRRNDEVHTWLLQRIHEILDAAPPADQYLSVDEEKPKPAVFVFDDTQSNLSFVGNSLSSSNTAVYFEGTNILVYIRGSDDDHENWWEEPNGVPSGKGGVLVNAHYDSVSTGYGATDDGVGVVTCLQLIQYFMTPGHAPRRGLVVLLNNGEEDYLNGARVYGQHPISKFPHTFLNLEGAGAGGRAILFRSSDTEVTRPYMSSKYPFGSVLAADGFATGLIGSQTDYVVFEVDLGLRGLDVAFMEPRARYHTEQDDSRHTSKSSLWHMLSAAVATTEGLVSDKSDQFEGAPTDDAKVASGSGSKAVWFDLFGTTFVLFELHTLFALSVTLLVVAPLALLVTGIALTRADKMYLFRTSAKADESLDSVPLQGLRGFFRFPFLFAIPTAVTVGLAYLVTKVNPLIIHSSEYAVWSMMLSAWTFLAWFVSRMADFARPTALHRIYTLTWMFVLAWVLLVISTVYQNQRGLAGSYSVFFFFSGTFLATWISYLELFSLPRKSEYANQNRPTSRRASSYGGSRLGTASGEDHEEDDHDAEEEEEEQEPTESTSLLGGGQRTTFANYVRVAGDHRDSDTDHHYYPGVYKHEQRWSASLPTWTWTLQFLLMAPLVLIMVGPLALLLTSALHQTGQDGSSSLFIYVAIAALTTFLLTPLLPFIHRHTYHLPVFLLLVFLGTLIYNLVAFPFSPTNRLKLFFIQDIDLSTGSTTASLAGVQPYVHAAASTLPSTANQNITCTEHTTRGTKCAWPGLAPRVVPDTPYSDWLDFTISQQHNTTDDKEGDEDTHHPRKARITLSGRNTRACKLLFDSPISSFAVLGSSTDPRFPTSSPHGTKEIRLWSREWENEWVVDVAWTTSTNDDSEEGDEGEGKLNGKAVCLWSDNNSAGVIPALDEVRQFAPSWVAVSKAADGLVEGWKGFSI.

Over 1 to 16 the chain is Cytoplasmic; that stretch reads MAPLRLSRANPLAFAR. Residues 17 to 37 form a helical membrane-spanning segment; the sequence is WPVTLITAVVYLAFLIPLLIV. Topologically, residues 38–392 are vacuolar; that stretch reads HHVVPSPPTA…TTFVLFELHT (355 aa). The N-linked (GlcNAc...) asparagine glycan is linked to asparagine 121. Zn(2+)-binding residues include histidine 176 and aspartate 188. The active-site Proton acceptor is glutamate 222. Residues glutamate 223, glutamate 248, and histidine 321 each contribute to the Zn(2+) site. The chain crosses the membrane as a helical span at residues 393-413; that stretch reads LFALSVTLLVVAPLALLVTGI. At 414–444 the chain is on the cytoplasmic side; that stretch reads ALTRADKMYLFRTSAKADESLDSVPLQGLRG. Residues 445-465 form a helical membrane-spanning segment; that stretch reads FFRFPFLFAIPTAVTVGLAYL. Topologically, residues 466–475 are vacuolar; it reads VTKVNPLIIH. A helical transmembrane segment spans residues 476 to 496; sequence SSEYAVWSMMLSAWTFLAWFV. Residues 497-510 lie on the Cytoplasmic side of the membrane; it reads SRMADFARPTALHR. The helical transmembrane segment at 511–531 threads the bilayer; it reads IYTLTWMFVLAWVLLVISTVY. The Vacuolar portion of the chain corresponds to 532–535; the sequence is QNQR. Residues 536-556 form a helical membrane-spanning segment; sequence GLAGSYSVFFFFSGTFLATWI. At 557–668 the chain is on the cytoplasmic side; that stretch reads SYLELFSLPR…SASLPTWTWT (112 aa). Positions 573-585 are enriched in polar residues; the sequence is QNRPTSRRASSYG. The interval 573 to 622 is disordered; sequence QNRPTSRRASSYGGSRLGTASGEDHEEDDHDAEEEEEEQEPTESTSLLGG. Residues 596–613 are compositionally biased toward acidic residues; sequence DHEEDDHDAEEEEEEQEP. Residues 669–689 form a helical membrane-spanning segment; that stretch reads LQFLLMAPLVLIMVGPLALLL. Residues 690 to 704 are Vacuolar-facing; the sequence is TSALHQTGQDGSSSL. Residues 705-725 form a helical membrane-spanning segment; it reads FIYVAIAALTTFLLTPLLPFI. Over 726–732 the chain is Cytoplasmic; sequence HRHTYHL. Residues 733–753 traverse the membrane as a helical segment; it reads PVFLLLVFLGTLIYNLVAFPF. The Vacuolar segment spans residues 754–986; the sequence is SPTNRLKLFF…LVEGWKGFSI (233 aa). Residues asparagine 799, asparagine 840, and asparagine 948 are each glycosylated (N-linked (GlcNAc...) asparagine). The segment at 840-859 is disordered; that stretch reads NTTDDKEGDEDTHHPRKARI.

It belongs to the peptidase M28 family. Zn(2+) is required as a cofactor.

Its subcellular location is the vacuole membrane. Functionally, may be involved in vacuolar sorting and osmoregulation. This is Vacuolar membrane protease from Aspergillus niger (strain ATCC MYA-4892 / CBS 513.88 / FGSC A1513).